The chain runs to 356 residues: Histidinol-phosphate aminotransferase 2 (356 aa).

Residue K213 is modified to N6-(pyridoxal phosphate)lysine.

It belongs to the class-II pyridoxal-phosphate-dependent aminotransferase family. Histidinol-phosphate aminotransferase subfamily. Homodimer. The cofactor is pyridoxal 5'-phosphate.

The catalysed reaction is L-histidinol phosphate + 2-oxoglutarate = 3-(imidazol-4-yl)-2-oxopropyl phosphate + L-glutamate. Its pathway is amino-acid biosynthesis; L-histidine biosynthesis; L-histidine from 5-phospho-alpha-D-ribose 1-diphosphate: step 7/9. The sequence is that of Histidinol-phosphate aminotransferase 2 from Burkholderia mallei (strain ATCC 23344).